A 220-amino-acid chain; its full sequence is Ribonuclease HII (220 aa).

The 189-residue stretch at 32-220 folds into the RNase H type-2 domain; it reads KHIAGIDEAG…FAPIKGRFDC (189 aa). Residues D38, E39, and D130 each coordinate a divalent metal cation.

This sequence belongs to the RNase HII family. Mn(2+) serves as cofactor. Mg(2+) is required as a cofactor.

Its subcellular location is the cytoplasm. The catalysed reaction is Endonucleolytic cleavage to 5'-phosphomonoester.. Functionally, endonuclease that specifically degrades the RNA of RNA-DNA hybrids. The sequence is that of Ribonuclease HII from Brucella ovis (strain ATCC 25840 / 63/290 / NCTC 10512).